We begin with the raw amino-acid sequence, 443 residues long: ATP-dependent protease ATPase subunit HslU (443 aa).

ATP is bound by residues Ile18 and 60–65; that span reads GVGKTE. Residues 137-156 form a disordered region; it reads PPPRDAWGQNEQSEDTSNTR. Residues 145–156 are compositionally biased toward polar residues; it reads QNEQSEDTSNTR. ATP is bound by residues Asp256, Glu321, and Arg393.

It belongs to the ClpX chaperone family. HslU subfamily. In terms of assembly, a double ring-shaped homohexamer of HslV is capped on each side by a ring-shaped HslU homohexamer. The assembly of the HslU/HslV complex is dependent on binding of ATP.

The protein localises to the cytoplasm. Its function is as follows. ATPase subunit of a proteasome-like degradation complex; this subunit has chaperone activity. The binding of ATP and its subsequent hydrolysis by HslU are essential for unfolding of protein substrates subsequently hydrolyzed by HslV. HslU recognizes the N-terminal part of its protein substrates and unfolds these before they are guided to HslV for hydrolysis. This Vibrio vulnificus (strain YJ016) protein is ATP-dependent protease ATPase subunit HslU.